The primary structure comprises 215 residues: ATP phosphoribosyltransferase (215 aa).

The protein belongs to the ATP phosphoribosyltransferase family. Short subfamily. As to quaternary structure, heteromultimer composed of HisG and HisZ subunits.

The protein resides in the cytoplasm. The catalysed reaction is 1-(5-phospho-beta-D-ribosyl)-ATP + diphosphate = 5-phospho-alpha-D-ribose 1-diphosphate + ATP. It participates in amino-acid biosynthesis; L-histidine biosynthesis; L-histidine from 5-phospho-alpha-D-ribose 1-diphosphate: step 1/9. Functionally, catalyzes the condensation of ATP and 5-phosphoribose 1-diphosphate to form N'-(5'-phosphoribosyl)-ATP (PR-ATP). Has a crucial role in the pathway because the rate of histidine biosynthesis seems to be controlled primarily by regulation of HisG enzymatic activity. The protein is ATP phosphoribosyltransferase of Prochlorococcus marinus (strain MIT 9215).